Consider the following 458-residue polypeptide: ATP synthase subunit beta (458 aa).

An ATP-binding site is contributed by 148–155 (GGAGVGKT).

It belongs to the ATPase alpha/beta chains family. As to quaternary structure, F-type ATPases have 2 components, CF(1) - the catalytic core - and CF(0) - the membrane proton channel. CF(1) has five subunits: alpha(3), beta(3), gamma(1), delta(1), epsilon(1). CF(0) has three main subunits: a(1), b(2) and c(9-12). The alpha and beta chains form an alternating ring which encloses part of the gamma chain. CF(1) is attached to CF(0) by a central stalk formed by the gamma and epsilon chains, while a peripheral stalk is formed by the delta and b chains.

It localises to the cell inner membrane. It catalyses the reaction ATP + H2O + 4 H(+)(in) = ADP + phosphate + 5 H(+)(out). In terms of biological role, produces ATP from ADP in the presence of a proton gradient across the membrane. The catalytic sites are hosted primarily by the beta subunits. This Nitrosococcus oceani (strain ATCC 19707 / BCRC 17464 / JCM 30415 / NCIMB 11848 / C-107) protein is ATP synthase subunit beta.